Here is a 126-residue protein sequence, read N- to C-terminus: Aspartate 1-decarboxylase (126 aa).

Ser-25 acts as the Schiff-base intermediate with substrate; via pyruvic acid in catalysis. The residue at position 25 (Ser-25) is a Pyruvic acid (Ser). Residue Thr-57 participates in substrate binding. The Proton donor role is filled by Tyr-58. Residue 73-75 (GAA) participates in substrate binding.

Belongs to the PanD family. In terms of assembly, heterooctamer of four alpha and four beta subunits. Requires pyruvate as cofactor. Is synthesized initially as an inactive proenzyme, which is activated by self-cleavage at a specific serine bond to produce a beta-subunit with a hydroxyl group at its C-terminus and an alpha-subunit with a pyruvoyl group at its N-terminus.

The protein localises to the cytoplasm. The enzyme catalyses L-aspartate + H(+) = beta-alanine + CO2. It participates in cofactor biosynthesis; (R)-pantothenate biosynthesis; beta-alanine from L-aspartate: step 1/1. Its function is as follows. Catalyzes the pyruvoyl-dependent decarboxylation of aspartate to produce beta-alanine. In Cellvibrio japonicus (strain Ueda107) (Pseudomonas fluorescens subsp. cellulosa), this protein is Aspartate 1-decarboxylase.